Here is a 588-residue protein sequence, read N- to C-terminus: MTRQRTQHVHFLGIGGSGLSPLAQIHLAGGGKVSGSDAEDSPRVATLRARGVPVRVGPAPAAEKIAAELAGVDVVVASSALAEDHPEIVAARSLGLAVRRRSEWLPELTAGYRLVAVAGSHGKSTTSAMLTLVLRAAGLDPTAVIGAEVSQLGGNALAGSGDLFVLESDEYGGAFAGLEPTIAVITNVEWEHPDIFPDEASVRTAFTAFARRVRPGGRLVVCGDDPGVAAVLAELHRQGTPAAAPVLDYGFGTDRRWRAVDVATVAGDDTARAVVLHGGQEIGTLTLAVPGRHSLLNALAVLAVATELGVAPAQTLATLATYTGAARRFEFVGFWRAGTPDPAVPAAAGAAAAPPVRRDPATAAAAATTAPIGPPDSPPPTGIALPRAAPPAVDAPVAATPAPAAGPDHAAALPAPAGALASRSPTGPATAVADPVGEWSLEIIDDYAHHPTEIRLTLAAARARTHGRALWAVLQPHTYSRFAALLDGFATAFADADRVYVTDIYAARETDDLGRHPTDLVERLVGPAVVGYVPWPELVDRLAADVRDTLSGPVPAQAGGILLLTLGAGTITTVGPRLLAALDEPAAG.

An ATP-binding site is contributed by 119 to 125 (GSHGKST). Residues 344–371 (VPAAAGAAAAPPVRRDPATAAAAATTAP) show a composition bias toward low complexity. Positions 344-411 (VPAAAGAAAA…APAAGPDHAA (68 aa)) are disordered. Residues 372–381 (IGPPDSPPPT) show a composition bias toward pro residues. The segment covering 382-411 (GIALPRAAPPAVDAPVAATPAPAAGPDHAA) has biased composition (low complexity).

It belongs to the MurCDEF family.

The protein resides in the cytoplasm. It catalyses the reaction UDP-N-acetyl-alpha-D-muramate + L-alanine + ATP = UDP-N-acetyl-alpha-D-muramoyl-L-alanine + ADP + phosphate + H(+). Its pathway is cell wall biogenesis; peptidoglycan biosynthesis. Its function is as follows. Cell wall formation. The protein is UDP-N-acetylmuramate--L-alanine ligase of Frankia alni (strain DSM 45986 / CECT 9034 / ACN14a).